A 97-amino-acid chain; its full sequence is Serine protease inhibitor Kazal-type 14 (97 aa).

The first 21 residues, 1–21 (MAKSFPVFSLLSFILIHLVLS), serve as a signal peptide directing secretion. In terms of domain architecture, Kazal-like spans 34–97 (GIIKVKCPYE…RIRFYHDGKC (64 aa)). Cystine bridges form between cysteine 40/cysteine 79, cysteine 57/cysteine 76, and cysteine 65/cysteine 97. Asparagine 51 is a glycosylation site (N-linked (GlcNAc...) asparagine).

Its subcellular location is the secreted. In terms of biological role, may be a serine protease inhibitor. This Homo sapiens (Human) protein is Serine protease inhibitor Kazal-type 14 (SPINK14).